The primary structure comprises 462 residues: Transcription initiation factor TFIID subunit 7-like (462 aa).

Disordered regions lie at residues 1 to 97 (MECP…VPDE) and 327 to 366 (DSRS…SEEY). Low complexity-rich tracts occupy residues 16–30 (STPT…SQQE) and 66–77 (DADSSAQAAAQA). Acidic residues predominate over residues 333 to 365 (DDDEDEDDEDEDEDEDEDEDEDKEEEEEDCSEE). Residues 342-462 (DEDEDEDEDE…QEQLQRFLKK (121 aa)) are a coiled coil.

The protein belongs to the TAF7 family. In terms of assembly, TFIID is composed of TATA binding protein (TBP) and a number of TBP-associated factors (TAFs). TAF7L may replace TAF7 in a spermatogenesis-specific form of TFIID. Interacts with TBP; the interaction occurs in a sub-population of cells (pachytene and haploid round spermatids) and is developmentally regulated through differential intracellular localization of the two proteins. Interacts with TAF1. In terms of tissue distribution, testis-specific.

The protein localises to the nucleus. It is found in the cytoplasm. Its function is as follows. Probably functions as a spermatogenesis-specific component of the DNA-binding general transcription factor complex TFIID, a multimeric protein complex that plays a central role in mediating promoter responses to various activators and repressors. May play a role in spermatogenesis. This chain is Transcription initiation factor TFIID subunit 7-like (TAF7L), found in Homo sapiens (Human).